The primary structure comprises 704 residues: MSGIALQGIRCHACRNAAFRSFAAISGLSSSIRRPQSSISYPGSKLYQRNVRTTGRRQFSTLGSVKSQVDSDLPTKTETKEDASAESSHIPWYLQDESHKPSSHPLKQQELPPLPENPPPILENLLQYISVDAGLDDLALLDLRGLDPPPALGANLIMIIGTARSVKHLNVSGDRLCRWLRSNYQLRPIADGLLGRNELKIKLRRRARKAKATGDASSLNSRDDGITTGWICVNVGDVENGPLKTKNSQDRNFIGFGGTEDKVRIVVQMLVEEKRSELQLEALWGSLLNPEAGEMNPAPRDDIWGNLSSETTSSRKGVDSIASTFSQRFPGRRHIHTQARPDTLEPLSHEILGNIVQESRPALPSKIVSTSMASPSVSSLLEQLSQLPEEEARRELGLGPGDRDSTLFLRLFYEAVSKSDTETVLIDKLSFARAAVLLKHPAYSKTDLYRAFKSMAASGCDISEELAMDTVRTLLSFQGPENAANERVPEQDIDLALRVLEHMSLRGIKIFNGEVFFLLHKASAFQSHVLPANDAPGATNTPADPDSISKVPVEELDHITTVHNRLSKLMASANVDFDYKDYPELLKMYFEHGNYSNFWRLWHRIPLMQIPRTKELYLLMFRLHAKLGHQRQAVDCLSSWVPMMAREQPPVALDEELTRDIMACMLVADPAIDQKTDDGTVSQFTRLWKQCLRDLKSFKAANSQ.

The transit peptide at 1–59 directs the protein to the mitochondrion; the sequence is MSGIALQGIRCHACRNAAFRSFAAISGLSSSIRRPQSSISYPGSKLYQRNVRTTGRRQF. A compositionally biased stretch (polar residues) spans 57–72; it reads RQFSTLGSVKSQVDSD. The segment at 57-118 is disordered; it reads RQFSTLGSVK…QELPPLPENP (62 aa). Basic and acidic residues predominate over residues 73–83; sequence LPTKTETKEDA.

It belongs to the ATP25 family.

Its subcellular location is the mitochondrion inner membrane. Probable mitochondrial mRNA stabilization factor. The chain is ATPase synthesis protein 25, mitochondrial (ATP25) from Arthroderma benhamiae (strain ATCC MYA-4681 / CBS 112371) (Trichophyton mentagrophytes).